The chain runs to 180 residues: Alkyl hydroperoxide reductase AhpD (180 aa).

C131 (proton donor) is an active-site residue. A disulfide bond links C131 and C134. Residue C134 is the Cysteine sulfenic acid (-SOH) intermediate of the active site.

It belongs to the AhpD family.

It carries out the reaction N(6)-[(R)-dihydrolipoyl]-L-lysyl-[lipoyl-carrier protein] + a hydroperoxide = N(6)-[(R)-lipoyl]-L-lysyl-[lipoyl-carrier protein] + an alcohol + H2O. In terms of biological role, antioxidant protein with alkyl hydroperoxidase activity. Required for the reduction of the AhpC active site cysteine residues and for the regeneration of the AhpC enzyme activity. This is Alkyl hydroperoxide reductase AhpD from Hyphomonas neptunium (strain ATCC 15444).